The primary structure comprises 746 residues: Polyribonucleotide nucleotidyltransferase (746 aa).

Positions 493 and 499 each coordinate Mg(2+). The KH domain maps to 560 to 619 (PRIITLQINPEKIGALIGPGGKTIRSITEATGAQIDIEEDGRVYISTADAAAAQQAVAMV). Positions 629–698 (GDIFLGKVVR…GTGKVSLSRR (70 aa)) constitute an S1 motif domain. Positions 704–746 (ETAEDRRAAGAGRGLRDGGRSSGSERSGDRSPRSDDRPRPRRR) are disordered. 2 stretches are compositionally biased toward basic and acidic residues: residues 706–722 (AEDR…RDGG) and 729–746 (RSGD…PRRR).

It belongs to the polyribonucleotide nucleotidyltransferase family. Mg(2+) serves as cofactor.

The protein localises to the cytoplasm. It catalyses the reaction RNA(n+1) + phosphate = RNA(n) + a ribonucleoside 5'-diphosphate. Involved in mRNA degradation. Catalyzes the phosphorolysis of single-stranded polyribonucleotides processively in the 3'- to 5'-direction. The chain is Polyribonucleotide nucleotidyltransferase from Roseiflexus castenholzii (strain DSM 13941 / HLO8).